We begin with the raw amino-acid sequence, 374 residues long: Putative cullin-like protein 2 (374 aa).

The protein belongs to the cullin family.

The sequence is that of Putative cullin-like protein 2 from Arabidopsis thaliana (Mouse-ear cress).